The chain runs to 395 residues: S-adenosylmethionine synthase (395 aa).

ATP is bound at residue histidine 16. Aspartate 18 contacts Mg(2+). Residue glutamate 44 participates in K(+) binding. 2 residues coordinate L-methionine: glutamate 57 and glutamine 100. Residues 100 to 110 (QSPDIAQGVDR) are flexible loop. ATP is bound by residues 167–169 (DAK), 233–234 (RF), aspartate 242, 248–249 (RK), alanine 265, and lysine 269. Aspartate 242 lines the L-methionine pocket. Residue lysine 273 participates in L-methionine binding.

It belongs to the AdoMet synthase family. Homotetramer; dimer of dimers. It depends on Mg(2+) as a cofactor. The cofactor is K(+).

It is found in the cytoplasm. The catalysed reaction is L-methionine + ATP + H2O = S-adenosyl-L-methionine + phosphate + diphosphate. Its pathway is amino-acid biosynthesis; S-adenosyl-L-methionine biosynthesis; S-adenosyl-L-methionine from L-methionine: step 1/1. Functionally, catalyzes the formation of S-adenosylmethionine (AdoMet) from methionine and ATP. The overall synthetic reaction is composed of two sequential steps, AdoMet formation and the subsequent tripolyphosphate hydrolysis which occurs prior to release of AdoMet from the enzyme. This Burkholderia thailandensis (strain ATCC 700388 / DSM 13276 / CCUG 48851 / CIP 106301 / E264) protein is S-adenosylmethionine synthase.